The primary structure comprises 302 residues: Proteasome subunit beta (302 aa).

A propeptide spans 1-50 (MTITGSRGFPDGYLAPGSSFLDFAAQHAPTIMPGTQPTFDTIPQDIAPHG) (removed in mature form; by autocatalysis). T51 acts as the Nucleophile in catalysis. Residues 277-302 (EPGRDGPGNRLPSQGSATIIPESDQS) form a disordered region. The segment covering 287-302 (LPSQGSATIIPESDQS) has biased composition (polar residues).

This sequence belongs to the peptidase T1B family. The 20S proteasome core is composed of 14 alpha and 14 beta subunits that assemble into four stacked heptameric rings, resulting in a barrel-shaped structure. The two inner rings, each composed of seven catalytic beta subunits, are sandwiched by two outer rings, each composed of seven alpha subunits. The catalytic chamber with the active sites is on the inside of the barrel. Has a gated structure, the ends of the cylinder being occluded by the N-termini of the alpha-subunits. Is capped by the proteasome-associated ATPase, ARC.

It is found in the cytoplasm. It carries out the reaction Cleavage of peptide bonds with very broad specificity.. It participates in protein degradation; proteasomal Pup-dependent pathway. Its activity is regulated as follows. The formation of the proteasomal ATPase ARC-20S proteasome complex, likely via the docking of the C-termini of ARC into the intersubunit pockets in the alpha-rings, may trigger opening of the gate for substrate entry. Interconversion between the open-gate and close-gate conformations leads to a dynamic regulation of the 20S proteasome proteolysis activity. Component of the proteasome core, a large protease complex with broad specificity involved in protein degradation. This Jonesia denitrificans (strain ATCC 14870 / DSM 20603 / BCRC 15368 / CIP 55.134 / JCM 11481 / NBRC 15587 / NCTC 10816 / Prevot 55134) (Listeria denitrificans) protein is Proteasome subunit beta.